A 260-amino-acid chain; its full sequence is Transcriptional activator protein AsaR (260 aa).

The HTH luxR-type domain occupies 176–241 (EDDPQEALTD…QAIAKGVSSG (66 aa)). A DNA-binding region (H-T-H motif) is located at residues 200-219 (SGEIACILGITERTVNYHLN).

The protein belongs to the autoinducer-regulated transcriptional regulatory protein family.

In terms of biological role, functions as a BHL-responsive transcriptional regulator. The protein is Transcriptional activator protein AsaR of Aeromonas salmonicida.